A 323-amino-acid polypeptide reads, in one-letter code: Phosphatidylglycerol--prolipoprotein diacylglyceryl transferase (323 aa).

The next 3 helical transmembrane spans lie at 15–35, 58–78, and 106–126; these read VIQG…ILIS, FMFS…TLVY, and GMAI…TINT. Arginine 156 is an a 1,2-diacyl-sn-glycero-3-phospho-(1'-sn-glycerol) binding site. A run of 2 helical transmembrane segments spans residues 242 to 262 and 289 to 309; these read GFIF…IEYL and ISMG…WIIV.

Belongs to the Lgt family.

It localises to the cell inner membrane. The enzyme catalyses L-cysteinyl-[prolipoprotein] + a 1,2-diacyl-sn-glycero-3-phospho-(1'-sn-glycerol) = an S-1,2-diacyl-sn-glyceryl-L-cysteinyl-[prolipoprotein] + sn-glycerol 1-phosphate + H(+). The protein operates within protein modification; lipoprotein biosynthesis (diacylglyceryl transfer). Functionally, catalyzes the transfer of the diacylglyceryl group from phosphatidylglycerol to the sulfhydryl group of the N-terminal cysteine of a prolipoprotein, the first step in the formation of mature lipoproteins. The polypeptide is Phosphatidylglycerol--prolipoprotein diacylglyceryl transferase (Borreliella afzelii (strain PKo) (Borrelia afzelii)).